We begin with the raw amino-acid sequence, 380 residues long: NF-kappa-B inhibitor-like protein 1 (380 aa).

A disordered region spans residues 1-34 (MSNPSPQVPEEEASTSVCRPKSSMASTSRRQRRE). ANK repeat units lie at residues 64 to 93 (GQPP…DPAH) and 97 to 133 (HGDT…IKNK). Disordered regions lie at residues 131–166 (KNKD…EWRQ) and 185–293 (GDAS…RGSL). Serine 150 bears the Phosphoserine mark. Over residues 237–286 (QQEEEQRLFRERARAKEEELRESRARRAQEALGDREPKPTRAGPREEHPR) the composition is skewed to basic and acidic residues.

Interacts with CACTIN (via N-terminal domain); the interaction occurs in a pro-inflammatory-independent manner.

It is found in the nucleus. In terms of biological role, involved in the regulation of innate immune response. Acts as negative regulator of Toll-like receptor and interferon-regulatory factor (IRF) signaling pathways. Contributes to the negative regulation of transcriptional activation of NF-kappa-B target genes in response to endogenous pro-inflammatory stimuli. This is NF-kappa-B inhibitor-like protein 1 (NFKBIL1) from Pan troglodytes (Chimpanzee).